An 874-amino-acid chain; its full sequence is Cellulose synthase catalytic subunit [UDP-forming] (874 aa).

Transmembrane regions (helical) follow at residues S30–L50, I151–F171, P173–M193, and L230–G250. A catalytic subdomain A region spans residues Q271–V364. D313 is a catalytic residue. D360 and D362 together coordinate substrate. The catalytic subdomain B stretch occupies residues K441 to M501. Residue D457 is part of the active site. 5 helical membrane-spanning segments follow: residues L525–L545, F547–I567, I592–P612, V634–V654, and V668–V688. Residues Q694–F790 enclose the PilZ domain. The helical transmembrane segment at S833 to P853 threads the bilayer.

Belongs to the glycosyltransferase 2 family. Mg(2+) is required as a cofactor.

The protein resides in the cell inner membrane. The catalysed reaction is [(1-&gt;4)-beta-D-glucosyl](n) + UDP-alpha-D-glucose = [(1-&gt;4)-beta-D-glucosyl](n+1) + UDP + H(+). Its pathway is glycan metabolism; bacterial cellulose biosynthesis. With respect to regulation, activated by bis-(3'-5') cyclic diguanylic acid (c-di-GMP). In terms of biological role, catalytic subunit of cellulose synthase. It polymerizes uridine 5'-diphosphate glucose to cellulose, which is produced as an extracellular component for mechanical and chemical protection at the onset of the stationary phase, when the cells exhibit multicellular behavior (rdar morphotype). Coexpression of cellulose and thin aggregative fimbriae leads to a hydrophobic network with tightly packed cells embedded in a highly inert matrix. In Salmonella typhimurium (strain LT2 / SGSC1412 / ATCC 700720), this protein is Cellulose synthase catalytic subunit [UDP-forming] (bcsA).